Consider the following 458-residue polypeptide: Argininosuccinate lyase (458 aa).

Belongs to the lyase 1 family. Argininosuccinate lyase subfamily.

Its subcellular location is the cytoplasm. It carries out the reaction 2-(N(omega)-L-arginino)succinate = fumarate + L-arginine. Its pathway is amino-acid biosynthesis; L-arginine biosynthesis; L-arginine from L-ornithine and carbamoyl phosphate: step 3/3. This Salmonella newport (strain SL254) protein is Argininosuccinate lyase.